The following is a 402-amino-acid chain: Arginine deiminase (402 aa).

Cysteine 391 serves as the catalytic Amidino-cysteine intermediate.

This sequence belongs to the arginine deiminase family.

The protein resides in the cytoplasm. The catalysed reaction is L-arginine + H2O = L-citrulline + NH4(+). It functions in the pathway amino-acid degradation; L-arginine degradation via ADI pathway; carbamoyl phosphate from L-arginine: step 1/2. In Mycobacterium marinum (strain ATCC BAA-535 / M), this protein is Arginine deiminase.